The chain runs to 439 residues: Forkhead box protein J1-A (439 aa).

Positions 124-218 form a DNA-binding region, fork-head; sequence KPPYSYATLI…INGAMKKRRL (95 aa). The disordered stretch occupies residues 273 to 293; it reads EHGWNSISDGKSHKRKQPLPK. Residues 284 to 293 show a composition bias toward basic residues; the sequence is SHKRKQPLPK.

This sequence belongs to the FOXJ1 family. In terms of tissue distribution, expressed in two independent areas of stage 10-11 embryos; in the dorsal blastopore lip (Spemann organizer) and shortly after in the ectodermal cells of the animal cap. As development proceeds, cells of the animal cap contribute to the epidermis and show a spotty pattern, which suggests expression in ciliated epidermal cells. Distribution of these cells is uniform in the trunk area of the embryo but more random in the head, being practically absent in the cement gland and olfactory placode. The spotted pattern becomes more dispersed as embryos grow in size. Due to cell movements during gastrulation, expression in the dorsal lip becomes located in the dorsal midline with expression restricted to the neuroectoderm. Expressed transiently in cells of the newly formed neural floor plate in the tail of older tadpoles.

Its subcellular location is the nucleus. Its function is as follows. Key transcription factor required for motile ciliogenesis. Activates genes essential for motile cilia formation and function. Required for ciliogenesis in multiciliated cells. The sequence is that of Forkhead box protein J1-A (foxj1-a) from Xenopus laevis (African clawed frog).